The following is an 800-amino-acid chain: Phenylalanine--tRNA ligase beta subunit (800 aa).

A tRNA-binding domain is found at 39–154 (TKDIKKLVVG…EAVKPGTDAL (116 aa)). In terms of domain architecture, B5 spans 408 to 483 (SFVTPIKITA…RIYGYDDIPS (76 aa)). Positions 461, 467, 470, and 471 each coordinate Mg(2+). In terms of domain architecture, FDX-ACB spans 708 to 800 (PRFPGVTRDI…ALKKHGAIIR (93 aa)).

The protein belongs to the phenylalanyl-tRNA synthetase beta subunit family. Type 1 subfamily. Tetramer of two alpha and two beta subunits. Requires Mg(2+) as cofactor.

The protein resides in the cytoplasm. The catalysed reaction is tRNA(Phe) + L-phenylalanine + ATP = L-phenylalanyl-tRNA(Phe) + AMP + diphosphate + H(+). The sequence is that of Phenylalanine--tRNA ligase beta subunit from Staphylococcus epidermidis (strain ATCC 35984 / DSM 28319 / BCRC 17069 / CCUG 31568 / BM 3577 / RP62A).